The sequence spans 261 residues: Early E1A protein (261 aa).

The tract at residues Pro43–Leu51 is interaction with RB1 in competition with E2F1. An interaction with UBE2I region spans residues Glu78 to Asp149. Residues Pro106–Ala110 carry the PXLXP motif, interaction with host ZMYND11 motif. Positions Leu115–Glu119 match the LXCXE motif, interaction with host RB1 and TMEM173/STING motif. Residues Cys163–Cys183 fold into a zinc finger. The segment at Ser197–Gln261 is disordered. Residues Ser203–Glu212 are compositionally biased toward low complexity. The PXDLS motif, CTBP-binding signature appears at Pro250–Ser254. The Nuclear localization signal motif lies at Arg256 to Gln261.

It belongs to the adenoviridae E1A protein family. As to quaternary structure, interacts with host UBE2I; this interaction interferes with polySUMOylation. Interacts with host RB1; this interaction induces the aberrant dissociation of RB1-E2F1 complex thereby disrupting the activity of RB1 and activating E2F1-regulated genes. Interacts with host ATF7; the interaction enhances ATF7-mediated viral transactivation activity which requires the zinc binding domains of both proteins. Isoform early E1A 32 kDa protein and isoform early E1A 26 kDa protein interact (via N-terminus) with CUL1 and E3 ubiquitin ligase RBX1; these interactions inhibit RBX1-CUL1-dependent elongation reaction of ubiquitin chains and attenuate ubiquitination of SCF(FBXW7) target proteins. Interacts (via PXLXP motif) with host ZMYND11/BS69 (via MYND-type zinc finger); this interaction inhibits E1A mediated transactivation. Interacts with host EP300; this interaction stimulates the acetylation of RB1 by recruiting EP300 and RB1 into a multimeric-protein complex. Interacts with host CTBP1 and CTBP2; this interaction seems to potentiate viral replication. Interacts with host DCAF7. Interacts with host DYRK1A. Interacts with host KPNA4; this interaction allows E1A import into the host nucleus. Interacts with host EP400; this interaction stabilizes MYC. Interacts with host TBP protein; this interaction probably disrupts the TBP-TATA complex. Interacts (via LXCXE motif) with host TMEM173/STING; this interaction impairs the ability of TMEM173/STING to sense cytosolic DNA and promote the production of type I interferon (IFN-alpha and IFN-beta). Interacts (via C-terminus) with host ZBED1/hDREF (via C-terminus); the interaction is direct.

Its subcellular location is the host nucleus. In terms of biological role, plays a role in viral genome replication by driving entry of quiescent cells into the cell cycle. Stimulation of progression from G1 to S phase allows the virus to efficiently use the cellular DNA replicating machinery to achieve viral genome replication. E1A protein has both transforming and trans-activating activities. Induces the disassembly of the E2F1 transcription factor from RB1 by direct competition for the same binding site on RB1, with subsequent transcriptional activation of E2F1-regulated S-phase genes and of the E2 region of the adenoviral genome. Release of E2F1 leads to the ARF-mediated inhibition of MDM2 and causes TP53/p53 to accumulate because it is not targeted for degradation by MDM2-mediated ubiquitination anymore. This increase in TP53, in turn, would arrest the cell proliferation and direct its death but this effect is counteracted by the viral protein E1B-55K. Inactivation of the ability of RB1 to arrest the cell cycle is critical for cellular transformation, uncontrolled cellular growth and proliferation induced by viral infection. Interaction with RBX1 and CUL1 inhibits ubiquitination of the proteins targeted by SCF(FBXW7) ubiquitin ligase complex, and may be linked to unregulated host cell proliferation. The tumorigenesis-restraining activity of E1A may be related to the disruption of the host CtBP-CtIP complex through the CtBP binding motif. Interaction with host TMEM173/STING impairs the ability of TMEM173/STING to sense cytosolic DNA and promote the production of type I interferon (IFN-alpha and IFN-beta). Promotes the sumoylation of host ZBED1/hDREF with SUMO1. The protein is Early E1A protein of Human adenovirus B serotype 7 (HAdV-7).